The primary structure comprises 466 residues: Ribosome biogenesis protein YTM1 (466 aa).

Residues 11 to 99 are ubiquitin-like (UBL) domain; it reads IKIKFFTNEE…EAFLTLEYTR (89 aa). The interval 109 to 466 is sufficient for interaction with ERB1 and association with 66S pre-ribosomes; that stretch reads SFNNDDWISS…QINKGSDIAK (358 aa). WD repeat units lie at residues 124–163, 165–203, 219–258, 296–336, 338–377, 384–424, and 431–466; these read PTTK…EKQY, GHSA…IIDE, GHKA…MTSI, GHSE…CVDT, TTGY…TSDQ, GHTN…SLYT, and STNA…DIAK.

The protein belongs to the WD repeat WDR12/YTM1 family. Component of the NOP7 complex, composed of ERB1, NOP7 and YTM1. The complex is held together by ERB1, which interacts with NOP7 via its N-terminal domain and with YTM1 via a high-affinity interaction between the seven-bladed beta-propeller domains of the 2 proteins. The NOP7 complex associates with the 66S pre-ribosome. Interacts (via UBL domain) with MDN1 (via VWFA/MIDAS domain).

The protein resides in the nucleus. The protein localises to the nucleolus. It is found in the nucleoplasm. Functionally, component of the NOP7 complex, which is required for maturation of the 25S and 5.8S ribosomal RNAs and formation of the 60S ribosome. In Candida albicans (strain SC5314 / ATCC MYA-2876) (Yeast), this protein is Ribosome biogenesis protein YTM1.